Here is a 73-residue protein sequence, read N- to C-terminus: Small ribosomal subunit protein eS27 (73 aa).

Zn(2+) is bound by residues Cys-28, Cys-31, Cys-47, and Cys-50. Residues 28-50 (CPKCGNRQVVFSHSTFRARCLNC) form a C4-type zinc finger.

Belongs to the eukaryotic ribosomal protein eS27 family. Part of the 30S ribosomal subunit. Zn(2+) serves as cofactor.

The sequence is that of Small ribosomal subunit protein eS27 from Aeropyrum pernix (strain ATCC 700893 / DSM 11879 / JCM 9820 / NBRC 100138 / K1).